Reading from the N-terminus, the 323-residue chain is Delta(7)-sterol 5(6)-desaturase ERG3B (323 aa).

Helical transmembrane passes span Ala-67–Leu-87, Ile-112–Gly-132, and Ser-150–Ile-170. One can recognise a Fatty acid hydroxylase domain in the interval Ile-157–Gly-285. Residues His-171–His-175 carry the Histidine box-1 motif. A Histidine box-2 motif is present at residues His-184–His-188. Positions His-262–His-266 match the Histidine box-3 motif.

This sequence belongs to the sterol desaturase family.

It is found in the endoplasmic reticulum membrane. The enzyme catalyses episterol + 2 Fe(II)-[cytochrome b5] + O2 + 2 H(+) = 5-dehydroepisterol + 2 Fe(III)-[cytochrome b5] + 2 H2O. It participates in steroid metabolism; ergosterol biosynthesis. Its function is as follows. C-5 sterol desaturase; part of the third module of ergosterol biosynthesis pathway that includes the late steps of the pathway. ERG3A and ERG3BB catalyze the introduction of a C-5 double bond in the B ring to produce 5-dehydroepisterol. The third module or late pathway involves the ergosterol synthesis itself through consecutive reactions that mainly occur in the endoplasmic reticulum (ER) membrane. Firstly, the squalene synthase ERG9 catalyzes the condensation of 2 farnesyl pyrophosphate moieties to form squalene, which is the precursor of all steroids. Squalene synthase is crucial for balancing the incorporation of farnesyl diphosphate (FPP) into sterol and nonsterol isoprene synthesis. Secondly, squalene is converted into lanosterol by the consecutive action of the squalene epoxidase ERG1 and the lanosterol synthase ERG7. Then, the delta(24)-sterol C-methyltransferase ERG6 methylates lanosterol at C-24 to produce eburicol. Eburicol is the substrate of the sterol 14-alpha demethylase encoded by CYP51A, CYP51B and CYP51C, to yield 4,4,24-trimethyl ergosta-8,14,24(28)-trienol. CYP51B encodes the enzyme primarily responsible for sterol 14-alpha-demethylation, and plays an essential role in ascospore formation. CYP51A encodes an additional sterol 14-alpha-demethylase, induced on ergosterol depletion and responsible for the intrinsic variation in azole sensitivity. The third CYP51 isoform, CYP51C, does not encode a sterol 14-alpha-demethylase, but is required for full virulence on host wheat ears. The C-14 reductase ERG24 then reduces the C14=C15 double bond which leads to 4,4-dimethylfecosterol. A sequence of further demethylations at C-4, involving the C-4 demethylation complex containing the C-4 methylsterol oxidases ERG25, the sterol-4-alpha-carboxylate 3-dehydrogenase ERG26 and the 3-keto-steroid reductase ERG27, leads to the production of fecosterol via 4-methylfecosterol. ERG28 has a role as a scaffold to help anchor ERG25, ERG26 and ERG27 to the endoplasmic reticulum. The C-8 sterol isomerase ERG2 then catalyzes the reaction which results in unsaturation at C-7 in the B ring of sterols and thus converts fecosterol to episterol. The sterol-C5-desaturases ERG3A and ERG3BB then catalyze the introduction of a C-5 double bond in the B ring to produce 5-dehydroepisterol. The C-22 sterol desaturases ERG5A and ERG5B further convert 5-dehydroepisterol into ergosta-5,7,22,24(28)-tetraen-3beta-ol by forming the C-22(23) double bond in the sterol side chain. Finally, ergosta-5,7,22,24(28)-tetraen-3beta-ol is substrate of the C-24(28) sterol reductase ERG4 to produce ergosterol. The chain is Delta(7)-sterol 5(6)-desaturase ERG3B from Gibberella zeae (strain ATCC MYA-4620 / CBS 123657 / FGSC 9075 / NRRL 31084 / PH-1) (Wheat head blight fungus).